The chain runs to 235 residues: Probable transcriptional regulatory protein CFF8240_0424 (235 aa).

It belongs to the TACO1 family.

It localises to the cytoplasm. The sequence is that of Probable transcriptional regulatory protein CFF8240_0424 from Campylobacter fetus subsp. fetus (strain 82-40).